The sequence spans 363 residues: UDP-N-acetylenolpyruvoylglucosamine reductase (363 aa).

The region spanning 25–201 (IGPVARRMLT…RSAPVRYREL (177 aa)) is the FAD-binding PCMH-type domain. Residue R168 is part of the active site. S249 serves as the catalytic Proton donor. E352 is a catalytic residue.

Belongs to the MurB family. It depends on FAD as a cofactor.

The protein localises to the cytoplasm. The enzyme catalyses UDP-N-acetyl-alpha-D-muramate + NADP(+) = UDP-N-acetyl-3-O-(1-carboxyvinyl)-alpha-D-glucosamine + NADPH + H(+). Its pathway is cell wall biogenesis; peptidoglycan biosynthesis. Its function is as follows. Cell wall formation. The chain is UDP-N-acetylenolpyruvoylglucosamine reductase from Mycolicibacterium smegmatis (strain ATCC 700084 / mc(2)155) (Mycobacterium smegmatis).